We begin with the raw amino-acid sequence, 75 residues long: Small ribosomal subunit protein bS18 (75 aa).

Belongs to the bacterial ribosomal protein bS18 family. Part of the 30S ribosomal subunit. Forms a tight heterodimer with protein bS6.

Functionally, binds as a heterodimer with protein bS6 to the central domain of the 16S rRNA, where it helps stabilize the platform of the 30S subunit. In Buchnera aphidicola subsp. Cinara cedri (strain Cc), this protein is Small ribosomal subunit protein bS18.